Here is a 443-residue protein sequence, read N- to C-terminus: Aspartate--tRNA(Asp/Asn) ligase (443 aa).

Position 175 (Glu-175) interacts with L-aspartate. The aspartate stretch occupies residues 197–200 (QLFK). Arg-219 is a binding site for L-aspartate. ATP-binding positions include 219-221 (RAE), 227-229 (RHL), and Glu-366. The Mg(2+) site is built by Glu-366 and Ser-369. Residues Ser-369 and Arg-373 each contribute to the L-aspartate site. 414–417 (GCER) contacts ATP.

This sequence belongs to the class-II aminoacyl-tRNA synthetase family. Type 2 subfamily. As to quaternary structure, homodimer. The cofactor is Mg(2+).

It localises to the cytoplasm. The catalysed reaction is tRNA(Asx) + L-aspartate + ATP = L-aspartyl-tRNA(Asx) + AMP + diphosphate. Functionally, aspartyl-tRNA synthetase with relaxed tRNA specificity since it is able to aspartylate not only its cognate tRNA(Asp) but also tRNA(Asn). Reaction proceeds in two steps: L-aspartate is first activated by ATP to form Asp-AMP and then transferred to the acceptor end of tRNA(Asp/Asn). The protein is Aspartate--tRNA(Asp/Asn) ligase of Methanococcoides burtonii (strain DSM 6242 / NBRC 107633 / OCM 468 / ACE-M).